Consider the following 1639-residue polypeptide: MRPPDDQINNNVGSNSHLEKLKEAMDHQLQKSSKIVGSFTNSQNSSVGSVHSPILESPTSLNRQHRNSFSFNNVSSPSLEDERLINFPRVNPNRLMTSKRPNELFKTSSMSSDCYSPQKSRESLNSLCHSPAPSVSSCGNALNNDNTSASHSLTDEQPFETDSSANLFKQLQEKRNRTIGNVYEMACLLVFKTGLMNFWKNIIDFFAQQFFSTQISVVEPRDLSDIYNTPWQLRCYYDGGSHYDPYSNPISVNDNLASSSYVTVVASDGSKGIIYKDPASLKHEGDLLIDSKVVQTVLERATLLVYTRKQQHIVKNTKVHDNDYFSSIPNVDDIRSIKNSWKVFHDEKLNELKKQVEISASAAQLNGLYPQKKRAFVSHFSQNRKPYSQSDISKAQSSSFSEEPSNIYDEYEQNLLSPWSRSPVASPSIQTDPNRNPFFQNCLQESSFATESSTEKSASESVSETAVNDDCKGMNFSGNRRQEDHLNDFTSFPTETAVSIVHVPLMFPCSDQTSSRGRAPIAILSFKSNLVPYPENLIASIERLIPFIFSSYSNSQSVPLLPCPTQRHLLFNTSSTDNTKELSMSASSENSDCPHKEGECVGSFCNINAKGSSLNNIPKLPRFVPVPSEFFKKNQRSWVTLKKHRLLARLKSRISKKNSKVNENLRFSLNDGENYSNETITLKKDEIVLDKSKSYACCTSESHKYVQGHCGGQAPPFPLLKVIIDSIPVHVFTADPGSGKLTWVNRKTLLYCGLNMNEQIELQFSRIHPDDLPNFLNDWKSSLFSGSGFYHEIRLQRFDNVYRYFICRAVPLRDCTGSVLHFFGTMTDVHDQKLAERELQKQSAIAANENSYRSLAEASPQIVFAANGKNGIIYANAQWLSYSGLSLESSLGLGFLSAVYHADRKKCLLPESLEGTFNNQDESNGTKTFAAEIRFRSTDGHYRWHLVKSVCVNNSADTSTNLWLGTCTDIHDHKMLEEKLQESNIEAQRIVRSKMQYLSNMSHEIRTPLIGITGMVSFLLETQMSAEQLSYARIIQQSAKSLLTVINDILDLSKVRAGMMKLTSQRFSVRAMMEDANETLGTLAFSKGIELNYTVDIDVPDIVFGDNMRMRQVALNVIGNAIKFTNVGEVFTRCSVEKIDYSTNTVVLKWECIDTGQGFNRDDQLQMFKPFSQVESSTLPRHGGSGLGLVISKELVELHNGSMSCQSRRGVGTRFMWTATFTMDKTPLKFEPPDGCCPVCFCPYEKSKQSTEDYYCADDGNDKSATNFVKLAVNKADPGRESNRRKLESDKNVQSNKYVNPFASESEFCRCGASADPYTVLFWRLYRNKPSGIKLDKSALAVVVSHTKYSSEAIGNMLQSIIDISSFKDIVRYGNTYEAFEELLENPMQSKVTHIILNLPDIEAYVLFVKSLQLCSLYKDTKFILVTSTRQKESLSKIFSDSEDCNSESIHYVLKLVKPSKFFPLFYSDSEEKGKIGALNDMTRKAAMEQKADAETLRYNLAKSGFSVLLAEDNIINIKVISRYLERIGVKFKVTMDGLQCVEEWKREKPNFYSLILMDLQMPVMDGYQACNEIRKYELENDYPKVPIVALSANALPHVVLSCKDSGFDSYLAKPITLQHLSLIISGILNYTNQSKLHK.

Positions 38 to 49 (SFTNSQNSSVGS) are enriched in polar residues. The interval 38–76 (SFTNSQNSSVGSVHSPILESPTSLNRQHRNSFSFNNVSS) is disordered. Residues 67 to 76 (NSFSFNNVSS) are compositionally biased toward low complexity. Residues 716 to 786 (PFPLLKVIID…NDWKSSLFSG (71 aa)) enclose the PAS 1 domain. Residues 789 to 841 (FYHEIRLQRFDNVYRYFICRAVPLRDCTGSVLHFFGTMTDVHDQKLAERELQK) enclose the PAC 1 domain. Residues 848–920 (NENSYRSLAE…ESLEGTFNNQ (73 aa)) enclose the PAS 2 domain. In terms of domain architecture, PAC 2 spans 929-982 (FAAEIRFRSTDGHYRWHLVKSVCVNNSADTSTNLWLGTCTDIHDHKMLEEKLQE). The Histidine kinase domain maps to 1000 to 1223 (NMSHEIRTPL…RFMWTATFTM (224 aa)). H1003 carries the post-translational modification Phosphohistidine; by autocatalysis. The Response regulatory domain occupies 1507–1629 (SVLLAEDNII…HLSLIISGIL (123 aa)). 4-aspartylphosphate is present on D1559.

The protein localises to the cytoplasm. The catalysed reaction is ATP + protein L-histidine = ADP + protein N-phospho-L-histidine.. Its function is as follows. Involved in the control of the SAPK-dependent transcriptional response to peroxide stress. Also has a role in G2/M regulation. In Schizosaccharomyces pombe (strain 972 / ATCC 24843) (Fission yeast), this protein is Peroxide stress-activated histidine kinase mak1 (mak1).